Reading from the N-terminus, the 152-residue chain is Pleckstrin homology-like domain family A member 2 (152 aa).

Phosphoserine is present on residues Ser3 and Ser42. Positions 7-99 (VLREGELEKR…WNAAIALALI (93 aa)) constitute a PH domain. Residues 112–152 (SRQERTAPAAPAEDAVAAAAAAPSEPSEPSRPSPQPKPRTP) form a disordered region. Positions 118 to 138 (APAAPAEDAVAAAAAAPSEPS) are enriched in low complexity. Pro residues predominate over residues 140 to 152 (PSRPSPQPKPRTP). A phosphoserine mark is found at Ser141 and Ser144. Thr151 carries the post-translational modification Phosphothreonine.

This sequence belongs to the PHLDA2 family. As to expression, expressed in placenta and adult prostate gland. In placenta, it is present in all cells of the villous cytotrophoblast. The protein is absent in cells from hydatidiform moles. Hydatidiform mole is a gestation characterized by abnormal development of both fetus and trophoblast. The majority of hydatidiform moles are associated with an excess of paternal to maternal genomes and are likely to result from the abnormal expression of imprinted genes (at protein level). Expressed at low levels in adult liver and lung, and fetal liver. Expressed in adult brain and neuroblastoma, medullablastoma and glioblastoma cell lines.

It is found in the cytoplasm. It localises to the membrane. Functionally, plays a role in regulating placenta growth. May act via its PH domain that competes with other PH domain-containing proteins, thereby preventing their binding to membrane lipids. The polypeptide is Pleckstrin homology-like domain family A member 2 (PHLDA2) (Homo sapiens (Human)).